A 356-amino-acid chain; its full sequence is UDP-N-acetylglucosamine--N-acetylmuramyl-(pentapeptide) pyrophosphoryl-undecaprenol N-acetylglucosamine transferase (356 aa).

UDP-N-acetyl-alpha-D-glucosamine-binding positions include 13–15 (TGG), asparagine 125, arginine 161, serine 189, isoleucine 243, and glutamine 288.

It belongs to the glycosyltransferase 28 family. MurG subfamily.

It localises to the cell inner membrane. It catalyses the reaction di-trans,octa-cis-undecaprenyl diphospho-N-acetyl-alpha-D-muramoyl-L-alanyl-D-glutamyl-meso-2,6-diaminopimeloyl-D-alanyl-D-alanine + UDP-N-acetyl-alpha-D-glucosamine = di-trans,octa-cis-undecaprenyl diphospho-[N-acetyl-alpha-D-glucosaminyl-(1-&gt;4)]-N-acetyl-alpha-D-muramoyl-L-alanyl-D-glutamyl-meso-2,6-diaminopimeloyl-D-alanyl-D-alanine + UDP + H(+). The protein operates within cell wall biogenesis; peptidoglycan biosynthesis. In terms of biological role, cell wall formation. Catalyzes the transfer of a GlcNAc subunit on undecaprenyl-pyrophosphoryl-MurNAc-pentapeptide (lipid intermediate I) to form undecaprenyl-pyrophosphoryl-MurNAc-(pentapeptide)GlcNAc (lipid intermediate II). The sequence is that of UDP-N-acetylglucosamine--N-acetylmuramyl-(pentapeptide) pyrophosphoryl-undecaprenol N-acetylglucosamine transferase from Cupriavidus metallidurans (strain ATCC 43123 / DSM 2839 / NBRC 102507 / CH34) (Ralstonia metallidurans).